We begin with the raw amino-acid sequence, 577 residues long: Cytochrome P450 714D1 (577 aa).

The Lumenal portion of the chain corresponds to 1-3 (MES). Residues 4-24 (FFVFFTAAALPVVVAAAVIAG) form a helical; Signal-anchor for type III membrane protein membrane-spanning segment. Over 25 to 577 (LCITAAWLAR…STAPVHSSHN (553 aa)) the chain is Cytoplasmic. The interval 315–343 (REHGGKAAPPSPPERDFLGSIIENSGGQP) is disordered. Cys504 is a binding site for heme.

It belongs to the cytochrome P450 family. Heme serves as cofactor. In terms of tissue distribution, expressed in rapidly elongating or dividing tissues, including the shoot apical meristem, the intercalary meristem and elongating zones of internodes, and panicle but not in young seedlings, roots and leaves. During the heading stage, the highest expression is detected in the flowering spikelets, anthers, the divisional zone and the node of the uppermost internode.

It localises to the endoplasmic reticulum membrane. Catalyzes the 16alpha,17-epoxidation on non-13-hydroxylated gibberellins (GAs), including GA4, GA9, and GA12. No activity with GA1, GA20, GA53 or ent-kaurenoic acid. Reduces the biological activity of GAs. The chain is Cytochrome P450 714D1 (CYP714D1) from Oryza sativa subsp. japonica (Rice).